A 21-amino-acid polypeptide reads, in one-letter code: Complement receptor 3-related protein (21 aa).

It is found in the secreted. Its function is as follows. Plays a role in adherence of C.albicans to buccal epithelial cells, and in biofilm formation. The protein is Complement receptor 3-related protein of Candida albicans (Yeast).